The primary structure comprises 617 residues: Na(+)/H(+) antiporter NhaA 1 (617 aa).

A na(+)/H(+) antiporter NhaA region spans residues M1 to W433. Transmembrane regions (helical) follow at residues A33 to A53, M75 to L95, A113 to F133, H141 to I161, L171 to F191, D194 to V214, V234 to I254, V304 to L324, W340 to L360, I378 to I398, and I411 to T431. The region spanning L434–R617 is the Thioredoxin domain.

This sequence in the N-terminal section; belongs to the NhaA Na(+)/H(+) (TC 2.A.33) antiporter family.

The protein resides in the cell membrane. The enzyme catalyses Na(+)(in) + 2 H(+)(out) = Na(+)(out) + 2 H(+)(in). Its function is as follows. Na(+)/H(+) antiporter that extrudes sodium in exchange for external protons. The polypeptide is Na(+)/H(+) antiporter NhaA 1 (Mycolicibacterium vanbaalenii (strain DSM 7251 / JCM 13017 / BCRC 16820 / KCTC 9966 / NRRL B-24157 / PYR-1) (Mycobacterium vanbaalenii)).